A 157-amino-acid polypeptide reads, in one-letter code: Phosphopantetheine adenylyltransferase (157 aa).

Residue Ser-9 participates in substrate binding. ATP contacts are provided by residues 9–10 and His-17; that span reads SF. Substrate is bound by residues Lys-41, Leu-74, and Lys-88. ATP-binding positions include 89 to 91, Glu-99, and 123 to 129; these read GLR and YTHVSSS.

This sequence belongs to the bacterial CoaD family. As to quaternary structure, homohexamer. Mg(2+) serves as cofactor.

The protein localises to the cytoplasm. The catalysed reaction is (R)-4'-phosphopantetheine + ATP + H(+) = 3'-dephospho-CoA + diphosphate. It functions in the pathway cofactor biosynthesis; coenzyme A biosynthesis; CoA from (R)-pantothenate: step 4/5. Its function is as follows. Reversibly transfers an adenylyl group from ATP to 4'-phosphopantetheine, yielding dephospho-CoA (dPCoA) and pyrophosphate. This chain is Phosphopantetheine adenylyltransferase, found in Micrococcus luteus (strain ATCC 4698 / DSM 20030 / JCM 1464 / CCM 169 / CCUG 5858 / IAM 1056 / NBRC 3333 / NCIMB 9278 / NCTC 2665 / VKM Ac-2230) (Micrococcus lysodeikticus).